The following is a 325-amino-acid chain: GTP 3',8-cyclase (325 aa).

One can recognise a Radical SAM core domain in the interval 4–219; that stretch reads TYQREINYLR…DAISAKLGPL (216 aa). A GTP-binding site is contributed by Arg-13. The [4Fe-4S] cluster site is built by Cys-20 and Cys-24. An S-adenosyl-L-methionine-binding site is contributed by Tyr-26. A [4Fe-4S] cluster-binding site is contributed by Cys-27. Residue Arg-63 participates in GTP binding. Gly-67 is a binding site for S-adenosyl-L-methionine. Thr-94 is a binding site for GTP. Ser-118 contributes to the S-adenosyl-L-methionine binding site. Lys-155 lines the GTP pocket. Met-189 serves as a coordination point for S-adenosyl-L-methionine. Positions 254 and 257 each coordinate [4Fe-4S] cluster. Residue 259–261 participates in GTP binding; it reads RLR. Cys-271 provides a ligand contact to [4Fe-4S] cluster.

This sequence belongs to the radical SAM superfamily. MoaA family. In terms of assembly, monomer and homodimer. It depends on [4Fe-4S] cluster as a cofactor.

The catalysed reaction is GTP + AH2 + S-adenosyl-L-methionine = (8S)-3',8-cyclo-7,8-dihydroguanosine 5'-triphosphate + 5'-deoxyadenosine + L-methionine + A + H(+). The protein operates within cofactor biosynthesis; molybdopterin biosynthesis. In terms of biological role, catalyzes the cyclization of GTP to (8S)-3',8-cyclo-7,8-dihydroguanosine 5'-triphosphate. The protein is GTP 3',8-cyclase of Pelotomaculum thermopropionicum (strain DSM 13744 / JCM 10971 / SI).